We begin with the raw amino-acid sequence, 269 residues long: Ribonuclease HII (269 aa).

An RNase H type-2 domain is found at 61 to 250 (RLVCGVDEAG…VRKMLSPGLE (190 aa)). Positions 67, 68, and 158 each coordinate a divalent metal cation.

This sequence belongs to the RNase HII family. It depends on Mn(2+) as a cofactor. Requires Mg(2+) as cofactor.

It localises to the cytoplasm. The catalysed reaction is Endonucleolytic cleavage to 5'-phosphomonoester.. Functionally, endonuclease that specifically degrades the RNA of RNA-DNA hybrids. The polypeptide is Ribonuclease HII (Parvibaculum lavamentivorans (strain DS-1 / DSM 13023 / NCIMB 13966)).